The sequence spans 610 residues: Glutamine--fructose-6-phosphate aminotransferase [isomerizing] (610 aa).

Residue Cys-2 is the Nucleophile; for GATase activity of the active site. One can recognise a Glutamine amidotransferase type-2 domain in the interval 2-218 (CGIVGAVAQR…EGDIAEITRR (217 aa)). 2 consecutive SIS domains span residues 278–426 (IVDS…VKGH) and 459–600 (LAED…VDQP). The For Fru-6P isomerization activity role is filled by Lys-605.

Homodimer.

It is found in the cytoplasm. The catalysed reaction is D-fructose 6-phosphate + L-glutamine = D-glucosamine 6-phosphate + L-glutamate. Catalyzes the first step in hexosamine metabolism, converting fructose-6P into glucosamine-6P using glutamine as a nitrogen source. The sequence is that of Glutamine--fructose-6-phosphate aminotransferase [isomerizing] from Haemophilus influenzae (strain ATCC 51907 / DSM 11121 / KW20 / Rd).